A 532-amino-acid chain; its full sequence is Probable NAD kinase 1 (532 aa).

A compositionally biased stretch (basic and acidic residues) spans 1 to 26; that stretch reads MSLDELPHKVSDERVNHDTVTSHESE. The disordered stretch occupies residues 1–32; that stretch reads MSLDELPHKVSDERVNHDTVTSHESEIGSGSI.

Belongs to the NAD kinase family.

The enzyme catalyses NAD(+) + ATP = ADP + NADP(+) + H(+). The chain is Probable NAD kinase 1 from Oryza sativa subsp. japonica (Rice).